Here is a 286-residue protein sequence, read N- to C-terminus: 3-methyl-2-oxobutanoate hydroxymethyltransferase (286 aa).

2 residues coordinate Mg(2+): Asp-51 and Asp-90. Residues 51–52 (DS), Asp-90, and Lys-120 contribute to the 3-methyl-2-oxobutanoate site. Position 122 (Glu-122) interacts with Mg(2+). Glu-189 acts as the Proton acceptor in catalysis. The tract at residues 263-286 (TFPGPSHVFSGSKASSDLNGGDES) is disordered.

It belongs to the PanB family. In terms of assembly, homodecamer; pentamer of dimers. Mg(2+) serves as cofactor.

The protein localises to the cytoplasm. It carries out the reaction 3-methyl-2-oxobutanoate + (6R)-5,10-methylene-5,6,7,8-tetrahydrofolate + H2O = 2-dehydropantoate + (6S)-5,6,7,8-tetrahydrofolate. The protein operates within cofactor biosynthesis; (R)-pantothenate biosynthesis; (R)-pantoate from 3-methyl-2-oxobutanoate: step 1/2. Catalyzes the reversible reaction in which hydroxymethyl group from 5,10-methylenetetrahydrofolate is transferred onto alpha-ketoisovalerate to form ketopantoate. The polypeptide is 3-methyl-2-oxobutanoate hydroxymethyltransferase (Mesorhizobium japonicum (strain LMG 29417 / CECT 9101 / MAFF 303099) (Mesorhizobium loti (strain MAFF 303099))).